We begin with the raw amino-acid sequence, 24 residues long: Unknown protein 6 (24 aa).

The polypeptide is Unknown protein 6 (Lonomia obliqua (Moth)).